The sequence spans 276 residues: F-actin-capping protein subunit alpha (276 aa).

Belongs to the F-actin-capping protein alpha subunit family. As to quaternary structure, heterodimer of an alpha and a beta subunit.

The protein localises to the cytoplasm. Its subcellular location is the cytoskeleton. In terms of biological role, F-actin-capping proteins bind in a Ca(2+)-independent manner to the fast growing ends of actin filaments (barbed end) thereby blocking the exchange of subunits at these ends. Unlike other capping proteins (such as gelsolin and severin), these proteins do not sever actin filaments. The sequence is that of F-actin-capping protein subunit alpha (cap1) from Aspergillus fumigatus (strain ATCC MYA-4609 / CBS 101355 / FGSC A1100 / Af293) (Neosartorya fumigata).